The following is a 755-amino-acid chain: Xaa-Pro dipeptidyl-peptidase (755 aa).

Residues Ser-348, Asp-468, and His-498 each act as charge relay system in the active site.

This sequence belongs to the peptidase S15 family. In terms of assembly, homodimer.

It is found in the cytoplasm. It catalyses the reaction Hydrolyzes Xaa-Pro-|- bonds to release unblocked, N-terminal dipeptides from substrates including Ala-Pro-|-p-nitroanilide and (sequentially) Tyr-Pro-|-Phe-Pro-|-Gly-Pro-|-Ile.. Removes N-terminal dipeptides sequentially from polypeptides having unsubstituted N-termini provided that the penultimate residue is proline. The protein is Xaa-Pro dipeptidyl-peptidase of Streptococcus thermophilus (strain ATCC BAA-250 / LMG 18311).